Reading from the N-terminus, the 381-residue chain is MYLSRFKQSGFRNLAPLNLEFDPHVNVFLGENAQGKTNLLEAIYFLAISRSHRTSNDREMIAFGQDFASLAGRVHKRQLDLDLRIVISKKGKSAWVNRVEQARLSKYVGHLNAILFSPEDMELVKGAPSLRRRFMDLEFGQINPEYLYFASQYRQLLQQRNNYLKQLARRQASDQVLLGVLTEQVATAASELIWRRYRYLADLNRYAAEAYRAISGQREELRVLYRPSAKEITAADQPAQIKQKLLDRFAEIADDELRRATTQLGPHRDDLEFQLDGKNAHLFASQGQQRTIALSLKLAEIQLIKQLTGEEPILLLDDVMSELDQNRQAALLNFIHGQTQTFITTTDLDSISQEIVKQPRIFYIHSGQIIEKEEGLNGRRR.

ATP is bound at residue 30 to 37; the sequence is GENAQGKT.

It belongs to the RecF family.

Its subcellular location is the cytoplasm. Functionally, the RecF protein is involved in DNA metabolism; it is required for DNA replication and normal SOS inducibility. RecF binds preferentially to single-stranded, linear DNA. It also seems to bind ATP. This Lactobacillus delbrueckii subsp. bulgaricus (strain ATCC 11842 / DSM 20081 / BCRC 10696 / JCM 1002 / NBRC 13953 / NCIMB 11778 / NCTC 12712 / WDCM 00102 / Lb 14) protein is DNA replication and repair protein RecF.